Consider the following 136-residue polypeptide: Glycine-rich RNA-binding protein 4, mitochondrial (136 aa).

Residues 1–33 (MAFCNKLSGILRQGVSQSSNGPVTSMLGSLRYM) constitute a mitochondrion transit peptide. One can recognise an RRM domain in the interval 35–113 (SKLFVGGLSW…RQIRVNLATE (79 aa)). Ser-43 is modified (phosphoserine). The interval 113-136 (ERSSAPRSSFGGGGGYGGGGGGGY) is disordered. Gly residues predominate over residues 122–136 (FGGGGGYGGGGGGGY). Residues 123 to 135 (GGGGGYGGGGGGG) form a glycine-rich (GR) required for cell-to-cell movement region.

The protein belongs to the GR-RBP family. Binds to small phloem-mobile single-stranded RNAs (ss-sRNA, e.g. small interfering RNA (siRNA) and microRNA (miRNA)) in the phloeme exudate, including viral-derived sRNA (vsiRNA). Abundantly expressed in young plants, root tips, and flowers, but weakly in mature leaves and stems, implying highly expression in actively proliferating organs.

The protein resides in the mitochondrion. The protein localises to the secreted. In terms of biological role, possibly has a role in RNA transcription or processing during stress. Binds sequence non-specifically to RNAs and DNAs. Mediates cell-to-cell trafficking of RNA interference (RNAi) signals (small RNAs (sRNA), e.g. small interfering RNA (siRNA) and microRNA (miRNA)) which regulate growth and development, as well as responses to environmental inputs, including pathogen attack; can compromise zucchini yellow mosaic virus (ZYMV) and tobacco rattle virus (TRV) infections at the early stage. This is Glycine-rich RNA-binding protein 4, mitochondrial from Arabidopsis thaliana (Mouse-ear cress).